Reading from the N-terminus, the 420-residue chain is MTMHEKMKLPSCSCSAFKCGKKDRWLNMERPIPFLLIGLTTILSVFILYTLNPLKFVIEHNIDQKLLLIKPHKEEDKCDLFNGNWVPDFEGSIYTNSSCATIPTSKNCFRNGRKDQDFLNWRWKPERCDLPRFDATAYLDIVRGKTLAFIGDSVARNHIESLLCLLSQKEVPVDAYLDSEDRNRIWHFPVHNFTLKMLWTKFLVHGEERVINGSSSGIFDLYLDKVDENWARDLHSLDYVVISDAHWFFRQVYLHRGSNVVACVYCNEANVTDRGVAFALRMAFRAAFSQINHCNKCKGIVTLLRTFSPSHFENGFWNTGGSCNRTSPYNDQKINFGAYEWEIRSMQVEEIERAEKRGKKGKSFGVLDVTMAMLMRPDGHPGAFWGNQWMKGYNDCVHWCLPGPIDVWNDLLLAVLRRLD.

Topologically, residues 1–30 (MTMHEKMKLPSCSCSAFKCGKKDRWLNMER) are cytoplasmic. Residues 31 to 51 (PIPFLLIGLTTILSVFILYTL) traverse the membrane as a helical; Signal-anchor for type II membrane protein segment. The Lumenal segment spans residues 52 to 420 (NPLKFVIEHN…LLLAVLRRLD (369 aa)). Cystine bridges form between Cys78/Cys128, Cys99/Cys164, Cys108/Cys400, and Cys323/Cys396. Asn96 carries N-linked (GlcNAc...) asparagine glycosylation. Residues 151–153 (GDS) carry the GDS motif motif. The active-site Nucleophile is the Ser153. Asn192, Asn212, Asn270, and Asn324 each carry an N-linked (GlcNAc...) asparagine glycan. Asp395 functions as the Proton donor in the catalytic mechanism. The DXXH motif motif lies at 395 to 398 (DCVH). His398 functions as the Proton acceptor in the catalytic mechanism.

It belongs to the PC-esterase family. TBL subfamily.

The protein resides in the golgi apparatus membrane. Xyloglucan acetyltransferase that catalyzes the acetylation of fucosylated Gal residues on xyloglucan side chains. Predominantly catalyze 6-O-monoacetylation of Gal residues in the Fuc-Gal-Xyl trisaccharide side chains of xyloglucan oligomers. The protein is Xyloglucan O-acetyltransferase 4 of Populus trichocarpa (Western balsam poplar).